The following is a 598-amino-acid chain: Aspartate--tRNA(Asp/Asn) ligase (598 aa).

Glu172 contributes to the L-aspartate binding site. The tract at residues 196–199 is aspartate; sequence QLFK. L-aspartate is bound at residue Arg218. Residues 218 to 220 and Gln227 contribute to the ATP site; that span reads RDE. His454 lines the L-aspartate pocket. Position 488 (Glu488) interacts with ATP. L-aspartate is bound at residue Arg495. 540–543 lines the ATP pocket; that stretch reads GLDR.

Belongs to the class-II aminoacyl-tRNA synthetase family. Type 1 subfamily. Homodimer.

It localises to the cytoplasm. The enzyme catalyses tRNA(Asx) + L-aspartate + ATP = L-aspartyl-tRNA(Asx) + AMP + diphosphate. Its function is as follows. Aspartyl-tRNA synthetase with relaxed tRNA specificity since it is able to aspartylate not only its cognate tRNA(Asp) but also tRNA(Asn). Reaction proceeds in two steps: L-aspartate is first activated by ATP to form Asp-AMP and then transferred to the acceptor end of tRNA(Asp/Asn). The chain is Aspartate--tRNA(Asp/Asn) ligase from Leptothrix cholodnii (strain ATCC 51168 / LMG 8142 / SP-6) (Leptothrix discophora (strain SP-6)).